The following is a 459-amino-acid chain: MNRLPSSASALACSAHALNLIEKRTLDHEEMKALNREVIEYFKEHVNPGFLEYRKSVTAGGDYGAVEWQAGSLNTLVDTQGQEFIDCLGGFGIFNVGHRNPVVVSAVQNQLAKQPLHSQELLDPLRAMLAKTLAALTPGKLKYSFFCNSGTESVEAALKLAKAYQSPRGKFTFIATSGAFHGKSLGALSATAKSTFRKPFMPLLPGFRHVPFGNIEAMRTALNECKKTGDDVAAVILEPIQGEGGVILPPPGYLTAVRKLCDEFGALMILDEVQTGMGRTGKMFACEHENVQPDILCLAKALGGGVMPIGATIATEEVFSVLFDNPFLHTTTFGGNPLACAAALATINVLLEQNLLAQAEQKGDMLLDGFRQLAREYPDLVQEARGKGMLMAIEFVDNEIGYNFASEMFRQRVLVAGTLNNAKTIRIEPPLTLTIEQCELVIKAARKALAAMRVSVEEA.

Pyridoxal 5'-phosphate contacts are provided by residues 150 to 151 and glutamine 274; that span reads GT. Lysine 300 bears the N6-(pyridoxal phosphate)lysine mark. Threonine 332 is a binding site for pyridoxal 5'-phosphate.

Belongs to the class-III pyridoxal-phosphate-dependent aminotransferase family. Putrescine aminotransferase subfamily. Pyridoxal 5'-phosphate serves as cofactor.

It catalyses the reaction an alkane-alpha,omega-diamine + 2-oxoglutarate = an omega-aminoaldehyde + L-glutamate. The catalysed reaction is putrescine + 2-oxoglutarate = 1-pyrroline + L-glutamate + H2O. It carries out the reaction cadaverine + 2-oxoglutarate = 5-aminopentanal + L-glutamate. Its pathway is amine and polyamine degradation; putrescine degradation; 4-aminobutanal from putrescine (transaminase route): step 1/1. Its function is as follows. Catalyzes the aminotransferase reaction from putrescine to 2-oxoglutarate, leading to glutamate and 4-aminobutanal, which spontaneously cyclizes to form 1-pyrroline. This is the first step in one of two pathways for putrescine degradation, where putrescine is converted into 4-aminobutanoate (gamma-aminobutyrate or GABA) via 4-aminobutanal. Also functions as a cadaverine transaminase in a a L-lysine degradation pathway to succinate that proceeds via cadaverine, glutarate and L-2-hydroxyglutarate. The protein is Putrescine aminotransferase of Shigella boydii serotype 4 (strain Sb227).